Here is a 965-residue protein sequence, read N- to C-terminus: Collagen alpha-1(I) chain (965 aa).

Residues 1–21 (SVPGPMGPSGPRGLPGPPGPG) show a composition bias toward pro residues. Residues 1 to 965 (SVPGPMGPSG…PGPPGPPGPP (965 aa)) form a disordered region. Pro15, Pro18, Pro20, Pro29, Pro32, Pro35, Pro49, Pro64, Pro70, Pro79, and Pro85 each carry 4-hydroxyproline. Residues 52–66 (NGDDGEAGKPGRPGE) are compositionally biased toward basic and acidic residues. Lys88 carries the post-translational modification 5-hydroxylysine; alternate. An O-linked (Gal...) hydroxylysine; alternate glycan is attached at Lys88. The residue at position 94 (Ser94) is a Phosphoserine. Over residues 102–118 (DAGPAGPKGEPGSPGEN) the composition is skewed to low complexity. A 4-hydroxyproline mark is found at Pro112, Pro115, Pro121, Pro130, Pro136, Pro157, Pro166, Pro169, Pro196, Pro199, Pro211, Pro217, Pro226, Pro232, Pro235, and Pro250. Residues 136-154 (PGASGPAGARGNDGATGAA) are compositionally biased toward low complexity. Over residues 156–168 (PPGPTGPAGPPGF) the composition is skewed to pro residues. The segment covering 202-241 (AGAAGPAGNPGADGQPGAKGANGAPGIAGAPGFPGARGPS) has biased composition (low complexity). Lys253 carries the 5-hydroxylysine modification. 4-hydroxyproline occurs at positions 259, 262, 273, 282, 297, 303, 312, and 318. A compositionally biased stretch (gly residues) spans 307 to 327 (GERGGPGSRGFPGADGAGPKG). Residue Lys326 is modified to 5-hydroxylysine. 4-hydroxyproline is present on residues Pro335, Pro344, Pro350, Pro356, Pro365, Pro368, Pro377, Pro386, Pro392, Pro404, Pro413, Pro422, Pro425, Pro443, Pro460, Pro466, Pro472, Pro480, Pro492, Pro501, Pro509, Pro515, and Pro524. The segment covering 359–385 (KGLTGSPGSPGPDGKTGPPGPAGQDGR) has biased composition (low complexity). The segment covering 394-413 (ARGQAGVMGFPGPKGAAGEP) has biased composition (low complexity). The segment covering 472-482 (PGEADLGAPGP) has biased composition (low complexity). Lys536 carries the 5-hydroxylysine modification. Pro542, Pro557, and Pro563 each carry 4-hydroxyproline. Residues 569–583 (SGPSGPAGPTGARGA) are compositionally biased toward low complexity. Ser572 carries the phosphoserine modification. Residues Pro584, Pro590, Pro593, Pro602, Pro608, Pro626, Pro635, and Pro644 each carry the 4-hydroxyproline modification. Low complexity predominate over residues 596–623 (AGFAGPPGADGQPGAKGEPGDAGAKGDA). A compositionally biased stretch (pro residues) spans 625–637 (PPGPAGPTGPPGP). Lys647 bears the 5-hydroxylysine mark. Over residues 652–668 (SAGPPGATGFPGAAGRV) the composition is skewed to low complexity. 4-hydroxyproline occurs at positions 656 and 662. A 3-hydroxyproline modification is found at Pro670. 16 positions are modified to 4-hydroxyproline: Pro671, Pro680, Pro683, Pro704, Pro713, Pro721, Pro730, Pro748, Pro757, Pro760, Pro766, Pro771, Pro777, Pro783, Pro791, and Pro797. The span at 697-706 (ETGPAGRPGE) shows a compositional bias: low complexity. Over residues 718–730 (KGSPGADGPAGAP) the composition is skewed to low complexity. Residues 768–780 (KGPPGPMGPPGLA) show a composition bias toward pro residues. Lys806 carries the 5-hydroxylysine modification. The segment covering 815-830 (SGPPGAPGAPGAPGPV) has biased composition (pro residues). 4-hydroxyproline occurs at positions 818, 821, and 824. Residues 851-865 (AGPAGARGPAGPQGP) are compositionally biased toward low complexity. The span at 866 to 880 (RGDKGETGEQGDRGI) shows a compositional bias: basic and acidic residues. Position 869 is a 5-hydroxylysine (Lys869). Position 881 is a 5-hydroxylysine; alternate (Lys881). Lys881 is a glycosylation site (O-linked (Gal...) hydroxylysine; alternate). 4 positions are modified to 4-hydroxyproline: Pro896, Pro899, Pro917, and Pro932. Residues 899–932 (PGEQGPSGASGPAGPRGPPGSAGSPGKDGLNGLP) show a composition bias toward low complexity. Pro937 bears the 3-hydroxyproline mark. Position 938 is a 4-hydroxyproline (Pro938). The segment covering 950–965 (VGPPGPPGPPGPPGPP) has biased composition (pro residues). 3-hydroxyproline is present on Pro952. Pro953 is modified (4-hydroxyproline). 3-hydroxyproline is present on Pro955. At Pro956 the chain carries 4-hydroxyproline. The residue at position 958 (Pro958) is a 3-hydroxyproline. 4-hydroxyproline occurs at positions 959, 962, and 965.

The protein belongs to the fibrillar collagen family. Trimers of one alpha 2(I) and two alpha 1(I) chains. In terms of processing, contains mostly 4-hydroxyproline. Proline residues at the third position of the tripeptide repeating unit (G-X-Y) are hydroxylated in some or all of the chains. Contains 3-hydroxyproline at a few sites. This modification occurs on the first proline residue in the sequence motif Gly-Pro-Hyp, where Hyp is 4-hydroxyproline. Post-translationally, lysine residues at the third position of the tripeptide repeating unit (G-X-Y) are 5-hydroxylated in some or all of the chains. In terms of processing, O-glycosylated on hydroxylated lysine residues. The O-linked glycan consists of a Glc-Gal disaccharide. As to expression, expressed in bones.

The protein localises to the secreted. It is found in the extracellular space. It localises to the extracellular matrix. In terms of biological role, type I collagen is a member of group I collagen (fibrillar forming collagen). This is Collagen alpha-1(I) chain from Scelidotherium sp. (strain SLP-2019) (South American ground sloth).